The chain runs to 114 residues: Nucleoid-associated protein MAE_23910 (114 aa).

This sequence belongs to the YbaB/EbfC family. In terms of assembly, homodimer.

It is found in the cytoplasm. Its subcellular location is the nucleoid. Functionally, binds to DNA and alters its conformation. May be involved in regulation of gene expression, nucleoid organization and DNA protection. The polypeptide is Nucleoid-associated protein MAE_23910 (Microcystis aeruginosa (strain NIES-843 / IAM M-2473)).